A 1942-amino-acid polypeptide reads, in one-letter code: Probable helicase with zinc finger domain (1942 aa).

The C3H1-type zinc-finger motif lies at 178-206 (SEEYTLCKRFLEQGICRYGAQCTSAHSQE). A Phosphoserine modification is found at Ser248. An ATP-binding site is contributed by 668–675 (GPYGTGKT). The DEAA box signature appears at 794–797 (DEAA). Over residues 1117-1127 (SGSTNKQQQSP) the composition is skewed to polar residues. The tract at residues 1117-1141 (SGSTNKQQQSPPKGKSLHHTQNDHF) is disordered. Thr1163 carries the post-translational modification Phosphothreonine. Arg1245 is subject to Omega-N-methylarginine. Disordered regions lie at residues 1246–1345 (GSPI…INLP), 1386–1429 (NLPE…GPNN), 1527–1552 (QGSA…GLHQ), and 1608–1637 (RQVQ…FNDN). Composition is skewed to basic and acidic residues over residues 1268 to 1281 (HQEK…RNGK) and 1292 to 1308 (NKIR…KQVD). A compositionally biased stretch (low complexity) spans 1399–1412 (NQVVQQQSQLNQQP). At Ser1614 the chain carries Phosphoserine. The span at 1623–1636 (SSTDHSSHFSNFND) shows a compositional bias: low complexity. Residues Ser1645, Ser1738, Ser1741, and Ser1766 each carry the phosphoserine modification. 3 disordered regions span residues 1729–1779 (FHPL…TPQD), 1792–1843 (NQSS…PEDQ), and 1870–1942 (MPNK…SYFK). Over residues 1731-1745 (PLSSRTVSSSSLPSL) the composition is skewed to low complexity. 2 stretches are compositionally biased toward polar residues: residues 1761–1779 (RISS…TPQD) and 1792–1825 (NQSS…SRTA). Composition is skewed to low complexity over residues 1876–1888 (AESA…QSSA) and 1920–1942 (LSLF…SYFK).

The protein belongs to the DNA2/NAM7 helicase family. Interacts with SMYD2. Interacts with POLR2A. Interacts with SMYD3; the interaction may bridge SMYD3 and RNA polymerase II. Expressed predominantly in thymus and brain. Expression is down-regulated in 28 of 95 tested cancer cell lines.

Its subcellular location is the nucleus. Its function is as follows. May act as a helicase that plays a role in RNA metabolism in multiple tissues and organs within the developing embryo. The protein is Probable helicase with zinc finger domain (HELZ) of Homo sapiens (Human).